The primary structure comprises 43 residues: Potassium channel toxin gamma-KTx 3.2 (43 aa).

Disulfide bonds link C5-C23, C11-C34, C20-C39, and C24-C41.

The protein belongs to the ergtoxin family. Gamma-KTx 3 subfamily. Expressed by the venom gland.

It is found in the secreted. Functionally, blocks Kv11/ERG potassium channels. This is Potassium channel toxin gamma-KTx 3.2 from Centruroides elegans (Bark scorpion).